A 156-amino-acid chain; its full sequence is Small ribosomal subunit protein uS7 (156 aa).

This sequence belongs to the universal ribosomal protein uS7 family. As to quaternary structure, part of the 30S ribosomal subunit. Contacts proteins S9 and S11.

In terms of biological role, one of the primary rRNA binding proteins, it binds directly to 16S rRNA where it nucleates assembly of the head domain of the 30S subunit. Is located at the subunit interface close to the decoding center, probably blocks exit of the E-site tRNA. The protein is Small ribosomal subunit protein uS7 of Buchnera aphidicola subsp. Baizongia pistaciae (strain Bp).